We begin with the raw amino-acid sequence, 734 residues long: Cleavage stimulation factor subunit 77 (734 aa).

12 HAT repeats span residues 20-52 (SPIA…AQMA), 54-85 (NNDD…FIRK), 93-128 (EGQE…FLKS), 139-172 (HRKT…FENT), 198-237 (ERKK…FEKG), 246-278 (SSTK…WHVK), 280-312 (GSTD…MEES), 314-345 (GAIQ…FLRR), 347-379 (EGVE…MAFC), 382-414 (KEPK…FLTR), 416-450 (NDDR…FEQT), and 474-505 (EGSS…DLDH). Residues 637-734 (VKQSFAAKGN…FSGELSGSTG (98 aa)) are disordered. Residues 664-677 (LPRDRRATKRKDSD) are compositionally biased toward basic and acidic residues. The segment covering 709–734 (ATSSQTPTGSTSYGSAFSGELSGSTG) has biased composition (polar residues).

As to quaternary structure, homodimer. Belongs to the CSTF complex. Forms a complex with cleavage and polyadenylation specificity factor (CPSF) subunits CPSF30, CSTF64, PCFS1, PCFS5 and FIPS5.

It is found in the nucleus. In terms of biological role, one of the multiple factors required for polyadenylation and 3'-end cleavage of pre-mRNAs. Required for the targeted 3' processing of antisense transcripts that triggers transcriptional silencing of the corresponding sense gene. This is Cleavage stimulation factor subunit 77 from Arabidopsis thaliana (Mouse-ear cress).